The primary structure comprises 78 residues: Delta-conotoxin-like TxMKLT1-0111 (78 aa).

A signal peptide spans 1 to 22; sequence MKLTCMMIVAVLFLTAWTFATA. The propeptide occupies 23–49; the sequence is DDSGNGLENLFSNAHHQMKNPEASKLN. 3 disulfides stabilise this stretch: Cys53–Cys68, Cys60–Cys72, and Cys67–Cys77.

Belongs to the conotoxin O1 superfamily. Expressed by the venom duct.

Its subcellular location is the secreted. Its function is as follows. Delta-conotoxins bind to site 6 of voltage-gated sodium channels (Nav) and inhibit the inactivation process. This is Delta-conotoxin-like TxMKLT1-0111 from Conus textile (Cloth-of-gold cone).